Here is a 623-residue protein sequence, read N- to C-terminus: Putative chaperone protein ClpB2, chloroplastic (623 aa).

One can recognise a Clp R domain in the interval 1–123 (MNDLKFDPNV…KSEVEKLRGE (123 aa)). 2 repeat regions span residues 6-71 (FDPN…NQSL) and 77-123 (RNLG…LRGE). The segment at 129–375 (LKTYGTDLVE…HVKAQLDIQP (247 aa)) is i. 172–179 (GEPGVGKT) contributes to the ATP binding site. The stretch at 368 to 462 (KAQLDIQPEE…LQEAERQHDV (95 aa)) forms a coiled coil. ATP is bound at residue 571–578 (GPTGVGKT).

The protein belongs to the ClpA/ClpB family.

This is Putative chaperone protein ClpB2, chloroplastic (CLPB2) from Arabidopsis thaliana (Mouse-ear cress).